Here is a 262-residue protein sequence, read N- to C-terminus: Putative ankyrin repeat protein FPV243 (262 aa).

The ANK repeat unit spans residues 25–54 (YGSTPLFEAICNCSCKNVKLFLENNADINE).

This is Putative ankyrin repeat protein FPV243 from Vertebrata (FPV).